Here is an 85-residue protein sequence, read N- to C-terminus: UPF0335 protein Oant_1161 (85 aa).

It belongs to the UPF0335 family.

The polypeptide is UPF0335 protein Oant_1161 (Brucella anthropi (strain ATCC 49188 / DSM 6882 / CCUG 24695 / JCM 21032 / LMG 3331 / NBRC 15819 / NCTC 12168 / Alc 37) (Ochrobactrum anthropi)).